We begin with the raw amino-acid sequence, 270 residues long: Putative methylsterol monooxygenase DDB_G0269788 (270 aa).

A run of 3 helical transmembrane segments spans residues 31-51 (FIAHEVFYFGSFIPFFLCDFM), 82-102 (IFVQLPMMYIFDPAIKAIGLS), and 110-130 (IPYLIFTIACCFLIEDFYFYW). Residues 118-249 (ACCFLIEDFY…FTYLDKIFGT (132 aa)) form the Fatty acid hydroxylase domain. The Histidine box-1 motif lies at 132–136 (HRALH). Residues 145–149 (HKVHH) carry the Histidine box-2 motif. A Histidine box-3 motif is present at residues 224 to 230 (FHDFHHE).

The protein belongs to the sterol desaturase family. It depends on Fe cation as a cofactor.

The protein resides in the endoplasmic reticulum membrane. The enzyme catalyses 4,4-dimethyl-5alpha-cholest-7-en-3beta-ol + 6 Fe(II)-[cytochrome b5] + 3 O2 + 5 H(+) = 4alpha-carboxy-4beta-methyl-5alpha-cholest-7-ene-3beta-ol + 6 Fe(III)-[cytochrome b5] + 4 H2O. It functions in the pathway steroid biosynthesis; zymosterol biosynthesis; zymosterol from lanosterol: step 3/6. This chain is Putative methylsterol monooxygenase DDB_G0269788, found in Dictyostelium discoideum (Social amoeba).